Consider the following 276-residue polypeptide: 4-deoxy-L-threo-5-hexosulose-uronate ketol-isomerase (276 aa).

His194, His196, Glu201, and His243 together coordinate Zn(2+).

It belongs to the KduI family. It depends on Zn(2+) as a cofactor.

The enzyme catalyses 5-dehydro-4-deoxy-D-glucuronate = 3-deoxy-D-glycero-2,5-hexodiulosonate. It participates in glycan metabolism; pectin degradation; 2-dehydro-3-deoxy-D-gluconate from pectin: step 4/5. Its function is as follows. Catalyzes the isomerization of 5-dehydro-4-deoxy-D-glucuronate to 3-deoxy-D-glycero-2,5-hexodiulosonate. This is 4-deoxy-L-threo-5-hexosulose-uronate ketol-isomerase from Caldicellulosiruptor bescii (strain ATCC BAA-1888 / DSM 6725 / KCTC 15123 / Z-1320) (Anaerocellum thermophilum).